The chain runs to 449 residues: Phosphoglucosamine mutase (449 aa).

Residue serine 100 is the Phosphoserine intermediate of the active site. Serine 100, aspartate 241, aspartate 243, and aspartate 245 together coordinate Mg(2+). Serine 100 carries the post-translational modification Phosphoserine.

This sequence belongs to the phosphohexose mutase family. Mg(2+) serves as cofactor. In terms of processing, activated by phosphorylation.

It carries out the reaction alpha-D-glucosamine 1-phosphate = D-glucosamine 6-phosphate. In terms of biological role, catalyzes the conversion of glucosamine-6-phosphate to glucosamine-1-phosphate. This Clostridium botulinum (strain ATCC 19397 / Type A) protein is Phosphoglucosamine mutase.